We begin with the raw amino-acid sequence, 180 residues long: Cytokinin-beta-glucosidase 1 (180 aa).

Functionally, hydrolyzes cytokinin glucosides thus liberating free cytokinins. The polypeptide is Cytokinin-beta-glucosidase 1 (ROLC1) (Linaria vulgaris (Toadflax)).